A 334-amino-acid chain; its full sequence is Cytoskeleton protein RodZ (334 aa).

At M1–G111 the chain is on the cytoplasmic side. One can recognise an HTH cro/C1-type domain in the interval L19–L71. A DNA-binding region (H-T-H motif) is located at residues Q30–E49. Residues W112–W132 form a helical; Signal-anchor for type II membrane protein membrane-spanning segment. Topologically, residues W133–Q334 are periplasmic. The disordered stretch occupies residues N155–G241. Low complexity-rich tracts occupy residues A170 to A211 and T219 to G241.

This sequence belongs to the RodZ family.

The protein localises to the cell inner membrane. In terms of biological role, cytoskeletal protein that is involved in cell-shape control through regulation of the length of the long axis. This is Cytoskeleton protein RodZ from Salmonella agona (strain SL483).